Here is a 227-residue protein sequence, read N- to C-terminus: Phosphatidate cytidylyltransferase (227 aa).

A run of 6 helical transmembrane segments spans residues 31 to 51, 65 to 85, 93 to 113, 131 to 151, 165 to 185, and 206 to 226; these read FVIA…LVGM, IPYL…LTFL, WLIM…MIGG, WSGL…ASFI, IYLF…DLFI, and GVLD…FISI.

It belongs to the CDS family.

It localises to the cell membrane. The catalysed reaction is a 1,2-diacyl-sn-glycero-3-phosphate + CTP + H(+) = a CDP-1,2-diacyl-sn-glycerol + diphosphate. The protein operates within phospholipid metabolism; CDP-diacylglycerol biosynthesis; CDP-diacylglycerol from sn-glycerol 3-phosphate: step 3/3. This chain is Phosphatidate cytidylyltransferase (cdsA), found in Rickettsia felis (strain ATCC VR-1525 / URRWXCal2) (Rickettsia azadi).